We begin with the raw amino-acid sequence, 145 residues long: 3-hydroxyacyl-[acyl-carrier-protein] dehydratase FabZ (145 aa).

Residue His47 is part of the active site.

The protein belongs to the thioester dehydratase family. FabZ subfamily.

The protein localises to the cytoplasm. The catalysed reaction is a (3R)-hydroxyacyl-[ACP] = a (2E)-enoyl-[ACP] + H2O. In terms of biological role, involved in unsaturated fatty acids biosynthesis. Catalyzes the dehydration of short chain beta-hydroxyacyl-ACPs and long chain saturated and unsaturated beta-hydroxyacyl-ACPs. In Methylobacillus flagellatus (strain ATCC 51484 / DSM 6875 / VKM B-1610 / KT), this protein is 3-hydroxyacyl-[acyl-carrier-protein] dehydratase FabZ.